The chain runs to 141 residues: Large ribosomal subunit protein uL11 (141 aa).

The protein belongs to the universal ribosomal protein uL11 family. In terms of assembly, part of the ribosomal stalk of the 50S ribosomal subunit. Interacts with L10 and the large rRNA to form the base of the stalk. L10 forms an elongated spine to which L12 dimers bind in a sequential fashion forming a multimeric L10(L12)X complex. Post-translationally, one or more lysine residues are methylated.

Its function is as follows. Forms part of the ribosomal stalk which helps the ribosome interact with GTP-bound translation factors. The protein is Large ribosomal subunit protein uL11 of Chlorobaculum tepidum (strain ATCC 49652 / DSM 12025 / NBRC 103806 / TLS) (Chlorobium tepidum).